The following is a 112-amino-acid chain: Evasin P1095 (112 aa).

A signal peptide spans 1 to 23; it reads MELNAFTILQIAVFIAVGYHANT. Disulfide bonds link Cys-48/Cys-66, Cys-52/Cys-68, and Cys-62/Cys-79. N-linked (GlcNAc...) asparagine glycosylation is present at Asn-51. A disordered region spans residues 89–112; that stretch reads GDPNDDPKINEATPQTQIFEKKRK.

It localises to the secreted. In terms of biological role, salivary chemokine-binding protein which binds to host chemokine CXCL8. The sequence is that of Evasin P1095 from Ixodes ricinus (Common tick).